We begin with the raw amino-acid sequence, 551 residues long: UvrABC system protein C (551 aa).

A GIY-YIG domain is found at 12 to 87 (EKPGVYIFKN…IFKHKPKYNI (76 aa)). The UVR domain maps to 193–228 (EFVKDYIEQKMNYHSKMLDFENAAKYRDLLLSFEKL).

This sequence belongs to the UvrC family. As to quaternary structure, interacts with UvrB in an incision complex.

Its subcellular location is the cytoplasm. Its function is as follows. The UvrABC repair system catalyzes the recognition and processing of DNA lesions. UvrC both incises the 5' and 3' sides of the lesion. The N-terminal half is responsible for the 3' incision and the C-terminal half is responsible for the 5' incision. This chain is UvrABC system protein C, found in Thermosipho africanus (strain TCF52B).